A 3330-amino-acid chain; its full sequence is Laminin subunit alpha-3 (3330 aa).

The N-terminal stretch at 1 to 31 is a signal peptide; sequence MAVALGRAPRSLPLLLTLLLLLLLRMSPSWS. A Laminin N-terminal domain is found at 40 to 295; it reads SSRSLHPPYF…SIKDISVGGR (256 aa). Asn139 carries an N-linked (GlcNAc...) asparagine glycan. The interval 295-725 is domain V; it reads RCVCNGHAEA…NNYYFPDLHH (431 aa). Disulfide bonds link Cys296–Cys305, Cys298–Cys316, Cys318–Cys327, Cys330–Cys350, Cys353–Cys362, Cys355–Cys387, Cys390–Cys399, Cys402–Cys420, Cys423–Cys433, Cys425–Cys440, Cys442–Cys451, Cys454–Cys464, Cys488–Cys500, Cys490–Cys506, Cys508–Cys517, Cys520–Cys530, Cys533–Cys545, Cys535–Cys552, Cys554–Cys563, Cys566–Cys583, Cys628–Cys642, Cys630–Cys649, Cys651–Cys660, Cys663–Cys678, Cys681–Cys693, Cys683–Cys700, and Cys702–Cys711. 8 Laminin EGF-like domains span residues 296-350, 353-420, 423-464, 488-530, 533-576, 582-625, 628-678, and 681-725; these read CVCN…HNEC, CNCH…LHGC, CSCD…FPFC, CDCN…FPIC, CQCS…FPYC, VCHP…PRGC, CQCH…YFGC, and CQCD…DLHH. A glycan (N-linked (GlcNAc...) asparagine) is linked at Asn445. Positions 793-1262 are domain IV 1 (domain IV B); it reads TEAISGRITL…VAFYHNGAIP (470 aa). Residues 1263 to 1462 form a domain III B region; sequence CECDPAGTAG…CFCFGVNTDC (200 aa). 12 cysteine pairs are disulfide-bonded: Cys1309/Cys1316, Cys1311/Cys1323, Cys1325/Cys1334, Cys1337/Cys1350, Cys1353/Cys1368, Cys1355/Cys1375, Cys1377/Cys1386, Cys1389/Cys1399, Cys1402/Cys1414, Cys1404/Cys1421, Cys1423/Cys1432, and Cys1435/Cys1450. Laminin EGF-like domains are found at residues 1309 to 1352, 1353 to 1401, and 1402 to 1452; these read CNCG…GCDV, CNCS…ECVP, and CSCN…GCTK. Asn1354 carries an N-linked (GlcNAc...) asparagine glycan. Positions 1453 to 1462 constitute a Laminin EGF-like 12; first part domain; it reads CFCFGVNTDC. Residues 1466-1650 form the Laminin IV type A domain; that stretch reads HKQRAKFVDM…SGPRAHLVEM (185 aa). In terms of domain architecture, Laminin EGF-like 12; second part spans 1651–1683; the sequence is CACPPDYTGDSCQGCRPGYYWDNKSLPVGRCVP. The tract at residues 1651–1818 is domain III A; that stretch reads CACPPDYTGD…DGSPAEECDD (168 aa). N-linked (GlcNAc...) asparagine glycosylation occurs at Asn1673. Intrachain disulfides connect Cys1684-Cys1693, Cys1686-Cys1700, Cys1703-Cys1712, Cys1715-Cys1728, Cys1731-Cys1743, Cys1733-Cys1752, Cys1754-Cys1763, and Cys1766-Cys1781. 2 Laminin EGF-like domains span residues 1684-1730 and 1731-1783; these read CNCN…SCRV and CPCP…SCQP. A Laminin EGF-like 15; truncated domain is found at 1784 to 1818; the sequence is CNCNSNGQLGPCDPLTGDCVNQEPKDGSPAEECDD. A domain II and I region spans residues 1819–2385; sequence CDSCVMTLLN…ARDAANKVAI (567 aa). Coiled coils occupy residues 1851–1980, 2012–2057, 2088–2165, and 2211–2238; these read TGAL…LRSR, VENN…HENE, LLQT…GDEL, and KRAK…QQVS. N-linked (GlcNAc...) asparagine glycosylation occurs at Asn2159. N-linked (GlcNAc...) asparagine glycosylation occurs at Asn2261. Positions 2274–2276 match the Cell attachment site motif; it reads RGD. Positions 2318-2383 form a coiled coil; that stretch reads SARREDFSKA…QQARDAANKV (66 aa). N-linked (GlcNAc...) asparagine glycans are attached at residues Asn2332, Asn2361, Asn2498, Asn2580, and Asn2747. Laminin G-like domains follow at residues 2386–2587, 2594–2756, 2763–2923, 2983–3147, and 3154–3327; these read PMRF…VEPC, SDKN…TKKC, VRTA…LGGC, ALQF…VSPC, and KGIY…LNGC. Disulfide bonds link Cys2557/Cys2587, Cys2733/Cys2756, and Cys2891/Cys2923. The N-linked (GlcNAc...) asparagine glycan is linked to Asn3094. Cys3124 and Cys3147 form a disulfide bridge. Asn3270 carries N-linked (GlcNAc...) asparagine glycosylation. Cys3299 and Cys3327 form a disulfide bridge.

Laminin is a complex glycoprotein, consisting of three different polypeptide chains (alpha, beta, gamma), which are bound to each other by disulfide bonds into a cross-shaped molecule comprising one long and three short arms with globules at each end. Alpha-3 is a subunit of laminin-5 (laminin-332 or epiligrin/kalinin/nicein), laminin-6 (laminin-311 or K-laminin) and laminin-7 (laminin-321 or KS-laminin). Basal membrane of the upper alimentary tract and urinary and nasal epithelia, salivary glands and teeth (both variants). Isoform A is predominantly expressed in skin, hair follicles and developing neurons of the trigeminal ganglion. Isoform B was found in bronchi, alveoli, stomach, intestinal crypts, whisker pads, CNS, telencephalic neuroectoderm, thalamus, Rathke pouch and periventricular subependymal germinal layer.

It is found in the secreted. The protein localises to the extracellular space. It localises to the extracellular matrix. The protein resides in the basement membrane. Functionally, binding to cells via a high affinity receptor, laminin is thought to mediate the attachment, migration and organization of cells into tissues during embryonic development by interacting with other extracellular matrix components. In terms of biological role, laminin-5 is thought to be involved in (1) cell adhesion via integrin alpha-3/beta-1 in focal adhesion and integrin alpha-6/beta-4 in hemidesmosomes, (2) signal transduction via tyrosine phosphorylation of pp125-FAK and p80, (3) differentiation of keratinocytes. This chain is Laminin subunit alpha-3 (Lama3), found in Mus musculus (Mouse).